The chain runs to 207 residues: MTKGILGTKIGMTQIWKGDRAVPVTVVLAGPCPVVQRKTKLTDGYEAVQLGFAPKSEKRVNRPELGHFKKAGVAPMRFLREFRDFAPEGDTVNVDIFAEGEKIDATGTSKGKGTQGVMKRWNFAGGPASHGSKKWHRRPGSIGQRKTPGRVYKGKRMAGHMGMERVTVQNLEVVEVRADENLILVKGAIPGANGGLVMLRQAAKGGK.

A disordered region spans residues 126 to 149 (GPASHGSKKWHRRPGSIGQRKTPG).

It belongs to the universal ribosomal protein uL3 family. In terms of assembly, part of the 50S ribosomal subunit. Forms a cluster with proteins L14 and L19.

Its function is as follows. One of the primary rRNA binding proteins, it binds directly near the 3'-end of the 23S rRNA, where it nucleates assembly of the 50S subunit. This chain is Large ribosomal subunit protein uL3, found in Deinococcus geothermalis (strain DSM 11300 / CIP 105573 / AG-3a).